Reading from the N-terminus, the 257-residue chain is MFSTFGSVPILTVVAIQLFLIRNVLSLNLTNAYLHHKCNNTQGIYKRGSAFEKNLNIALRTVIFNGDFRTGFRYGDVGEDPNTVFVMYQCRGDSYWSNCRTCVTTALSGLRKRCPGNKGAIIWYDQCLFEISTVDSYHKIDYENDFYLSNPKNVSNRELFNRETSALLEKLTTKATDKKNIDGANQLVLYAAGEKRIGTKKVYAMVQCTKDLVFTTCSSCLEWIFRMYSDCCDGKQGGRVLGTSCNFRYELYPFLRN.

Residues 1–26 (MFSTFGSVPILTVVAIQLFLIRNVLS) form the signal peptide. Gnk2-homologous domains are found at residues 32-136 (AYLH…TVDS) and 142-254 (YEND…LYPF).

This sequence belongs to the cysteine-rich repeat secretory protein family.

It localises to the secreted. This Arabidopsis thaliana (Mouse-ear cress) protein is Putative cysteine-rich repeat secretory protein 28 (CRRSP28).